A 402-amino-acid polypeptide reads, in one-letter code: Triose phosphate/phosphate translocator, non-green plastid, chloroplastic (402 aa).

Residues methionine 1–alanine 82 constitute a chloroplast transit peptide. Over alanine 83–lysine 98 the chain is Chloroplast intermembrane. The helical transmembrane segment at valine 99 to tyrosine 119 threads the bilayer. The region spanning isoleucine 118–valine 236 is the EamA domain. Over asparagine 120–methionine 131 the chain is Lumenal. The chain crosses the membrane as a helical span at residues threonine 132–asparagine 152. Residues leucine 153–alanine 209 lie on the Chloroplast intermembrane side of the membrane. Residues methionine 210 to glycine 230 form a helical membrane-spanning segment. Residues valine 231–threonine 278 are Lumenal-facing. The chain crosses the membrane as a helical span at residues leucine 279–serine 298. Topologically, residues glutamate 299–valine 374 are chloroplast intermembrane. Residues asparagine 375 to arginine 394 form a helical membrane-spanning segment. Residues isoleucine 395–alanine 402 lie on the Lumenal side of the membrane.

The protein belongs to the TPT transporter family. TPT (TC 2.A.7.9) subfamily. As to quaternary structure, homodimer.

The protein localises to the plastid. The protein resides in the chloroplast membrane. Functionally, mediates the export of fixed carbons from the chloroplasts into the cytosol in the form of triose phosphates. The polypeptide is Triose phosphate/phosphate translocator, non-green plastid, chloroplastic (NGTPT) (Brassica oleracea var. botrytis (Cauliflower)).